The sequence spans 400 residues: NADPH dehydrogenase 3 (400 aa).

The FMN site is built by Thr38 and Gln115. Substrate-binding residues include His192 and Asn195. Residue Tyr197 is the Proton donor of the active site. Arg244 and Arg349 together coordinate FMN. A substrate-binding site is contributed by Tyr376.

Homodimer or heterodimer with OYE2. The cofactor is FMN.

It carries out the reaction A + NADPH + H(+) = AH2 + NADP(+). Its function is as follows. Flavin-dependent enoate reductase that catalyzes the chemo- and stereoslective hydrogenation of electron-poor alkenes. The enzyme is reduced by NADPH, and oxygen, quinones, and alpha,beta-unsaturated aldehydes and ketones can act as electron acceptors to complete catalytic turnover. The physiological oxidant remains elusive. Has a prooxidant activity, increasing reactive oxygen species (ROS) levels when overexpressed. Formation of OYE2-OYE3 heterodimers contribute to the induction of programmed cell death upon oxidative stress. This chain is NADPH dehydrogenase 3, found in Saccharomyces cerevisiae (strain ATCC 204508 / S288c) (Baker's yeast).